The primary structure comprises 155 residues: 3-dehydroquinate dehydratase (155 aa).

Catalysis depends on tyrosine 22, which acts as the Proton acceptor. 3 residues coordinate substrate: asparagine 73, histidine 79, and aspartate 86. Histidine 99 serves as the catalytic Proton donor. Residues 100–101 and arginine 110 contribute to the substrate site; that span reads IS.

The protein belongs to the type-II 3-dehydroquinase family. As to quaternary structure, homododecamer.

It carries out the reaction 3-dehydroquinate = 3-dehydroshikimate + H2O. It participates in metabolic intermediate biosynthesis; chorismate biosynthesis; chorismate from D-erythrose 4-phosphate and phosphoenolpyruvate: step 3/7. Catalyzes a trans-dehydration via an enolate intermediate. This Campylobacter hominis (strain ATCC BAA-381 / DSM 21671 / CCUG 45161 / LMG 19568 / NCTC 13146 / CH001A) protein is 3-dehydroquinate dehydratase.